The sequence spans 1345 residues: Aldehyde oxidase 2 (1345 aa).

The 2Fe-2S ferredoxin-type domain maps to 9–96; sequence DELEFFVNGK…GAAVTTVEGV (88 aa). Residues cysteine 48, cysteine 53, cysteine 56, and cysteine 78 each contribute to the [2Fe-2S] cluster site. Glutamine 117 serves as a coordination point for Mo-molybdopterin. Cysteine 118, cysteine 121, cysteine 153, and cysteine 155 together coordinate [2Fe-2S] cluster. Cysteine 155 serves as a coordination point for Mo-molybdopterin. The region spanning 238–423 is the FAD-binding PCMH-type domain; it reads FYGERITWIA…GSVYIPHSQK (186 aa). Residues 266-273, alanine 347, serine 356, histidine 360, aspartate 369, and leucine 413 each bind FAD; that span reads LISGNTAL. Mo-molybdopterin is bound by residues 812-813, 1094-1097, glutamine 1209, and leucine 1274; these read GF and ASVG. The Proton acceptor; for azaheterocycle hydroxylase activity role is filled by glutamate 1276.

Belongs to the xanthine dehydrogenase family. As to quaternary structure, homodimer. [2Fe-2S] cluster serves as cofactor. It depends on FAD as a cofactor. Requires Mo-molybdopterin as cofactor.

It localises to the cytoplasm. The enzyme catalyses an aldehyde + O2 + H2O = a carboxylate + H2O2 + H(+). Oxidase with broad substrate specificity, oxidizing aromatic azaheterocycles, such as phthalazine, as well as aldehydes, such as benzaldehyde and retinal. This is Aldehyde oxidase 2 (Aox2) from Rattus norvegicus (Rat).